Reading from the N-terminus, the 519-residue chain is Ribonuclease Y 1 (519 aa).

Residues 2-22 traverse the membrane as a helical segment; it reads IILYIILAIIAIVVGYCAGFF. Residues 84-113 are disordered; that stretch reads QKQEDRLLQREDSLDRKDNSFEKRENSLER. Positions 209-294 constitute a KH domain; that stretch reads TITVVSLPND…EMVEKAKKEM (86 aa). The HD domain occupies 335 to 428; sequence VLNHSIEVAN…VAAANSISAA (94 aa).

Belongs to the RNase Y family.

Its subcellular location is the cell membrane. Functionally, endoribonuclease that initiates mRNA decay. This is Ribonuclease Y 1 from Pediococcus pentosaceus (strain ATCC 25745 / CCUG 21536 / LMG 10740 / 183-1w).